The chain runs to 654 residues: RING finger protein 112 (654 aa).

The RING-type zinc finger occupies 80-121 (CSICLERLREPISLDCGHDFCIRCFSTHRIPGCELPCCPECR). The tract at residues 154 to 654 (AVRAERLLLV…GDREPLLQEE (501 aa)) is interaction with ZBTB16. One can recognise a GB1/RHD3-type G domain in the interval 189-420 (DTPVCLLAVL…YILDVLSTAP (232 aa)). Residue 340–341 (RD) participates in GTP binding. The next 2 membrane-spanning stretches (helical) occupy residues 570–590 (LAAVGGAVGAGLMGLAGGVVG) and 603–623 (GMVAAGAAVGATGAAVVGGGV).

It belongs to the TRAFAC class dynamin-like GTPase superfamily. GB1/RHD3 GTPase family. GB1 subfamily. As to quaternary structure, self-associates. Interacts with SP1 in an oxidative stress-regulated manner. Interacts with SIGMAR1 in an oxidative stress-regulated manner. Interacts with ZBTB16 (via C2H2-type zinc finger domains 1 and 2). In terms of processing, auto-ubiquitinated. As to expression, expressed in most of the brain areas, including cortex, striatum, hippocampus, thalamus, and cerebellum (at protein level). Expressed in lateral amygdaloid nucleus, and ventromedial hypothalamus. Also expressed strongly in the marginal zone of brain vesicles, optic stalk, and cartilage primordium.

Its subcellular location is the membrane. It is found in the cytoplasm. The protein resides in the nucleus. The protein localises to the nuclear body. It localises to the nucleoplasm. Its subcellular location is the endosome. It is found in the cytoplasmic vesicle. The protein resides in the secretory vesicle. The protein localises to the synaptic vesicle. It localises to the postsynaptic density. Its subcellular location is the perikaryon. It is found in the cell projection. The protein resides in the neuron projection. It carries out the reaction S-ubiquitinyl-[E2 ubiquitin-conjugating enzyme]-L-cysteine + [acceptor protein]-L-lysine = [E2 ubiquitin-conjugating enzyme]-L-cysteine + N(6)-ubiquitinyl-[acceptor protein]-L-lysine.. It functions in the pathway protein modification; protein ubiquitination. In terms of biological role, E3 ubiquitin-protein ligase that plays an important role in neuronal differentiation, including neurogenesis and gliogenesis, during brain development. During embryonic development initiates neuronal differentiation by inducing cell cycle arrest at the G0/G1 phase through up-regulation of cell-cycle regulatory proteins. Plays a role not only in the fetal period during the development of the nervous system, but also in the adult brain, where it is involved in the maintenance of neural functions and protection of the nervous tissue cells from oxidative stress-induced damage. Exhibits GTPase and E3 ubiquitin-protein ligase activities. Regulates dendritic spine density and synaptic neurotransmission; its ability to hydrolyze GTP is involved in the maintenance of dendritic spine density. This chain is RING finger protein 112 (Rnf112), found in Mus musculus (Mouse).